A 474-amino-acid chain; its full sequence is F420-non-reducing hydrogenase vhc subunit A (474 aa).

Ni(2+)-binding residues include Cys61, Cys64, Cys445, and Cys448.

It belongs to the [NiFe]/[NiFeSe] hydrogenase large subunit family. In terms of assembly, the F420-non-reducing hydrogenase vhc is composed of three subunits; VhcA, VhcD and VhcG. Ni(2+) serves as cofactor.

This is F420-non-reducing hydrogenase vhc subunit A (vhcA) from Methanococcus voltae.